The chain runs to 1274 residues: DENN domain-containing protein 5B (1274 aa).

The residue at position 2 (S2) is an N-acetylserine. The uDENN domain occupies 39–244; the sequence is DELAGENFDQ…EVPLPPPGRS (206 aa). 2 positions are modified to phosphoserine: S49 and S178. One can recognise a cDENN domain in the interval 263 to 399; that stretch reads ELPLSDYPLR…VDFIQELSEV (137 aa). Residues 401–581 enclose the dDENN domain; the sequence is LQFGIPPEGS…DNKIMSQWEE (181 aa). The region spanning 772–932 is the RUN 1 domain; that stretch reads LEENTLIASL…DYFCFTSVFT (161 aa). Phosphoserine is present on S822. Residues 916–936 traverse the membrane as a helical segment; sequence LLSLNAVDYFCFTSVFTTIMI. A PLAT domain is found at 936-1044; the sequence is IPYRSVIIPI…DDGSLERILI (109 aa). Position 1062 is a phosphothreonine (T1062). S1068, S1076, and S1079 each carry phosphoserine. Residues 1118-1267 enclose the RUN 2 domain; sequence TVLLCGENGL…QDFTIVLEGS (150 aa).

This sequence belongs to the RAB6IP1 family.

It is found in the membrane. In terms of biological role, guanine nucleotide exchange factor (GEF) which may activate RAB39A and/or RAB39B. Promotes the exchange of GDP to GTP, converting inactive GDP-bound Rab proteins into their active GTP-bound form. This is DENN domain-containing protein 5B (Dennd5b) from Mus musculus (Mouse).